The sequence spans 333 residues: Transcription termination factor MTERF6, chloroplastic/mitochondrial (333 aa).

Belongs to the mTERF family.

Its subcellular location is the plastid. It is found in the chloroplast. The protein localises to the mitochondrion. Transcription termination factor essential for chloroplast development. Required for maturation of 16S rRNA, 18S rRNA and 23S rRNA in the chloroplast. Binds to a specific region within the tRNA(Ile)(GAU) gene at a position adjacent to and downstream of the 16S rRNA gene. Required for the maturation of tRNA(Ile)(GAU). Binds to double-stranded DNA. This is Transcription termination factor MTERF6, chloroplastic/mitochondrial from Arabidopsis thaliana (Mouse-ear cress).